The sequence spans 489 residues: Threonine/serine exporter (489 aa).

10 helical membrane-spanning segments follow: residues 151 to 171 (GFPV…VLLG), 174 to 194 (WQVS…TSFL), 206 to 226 (VVGG…ALQF), 233 to 253 (SQII…VQSL), 268 to 288 (FFET…GIQL), 314 to 334 (IIAG…EWSS), 335 to 355 (VIIA…FVVY), 356 to 376 (LGPV…GGLL), 381 to 401 (LIPP…GLAI), and 420 to 440 (IAVA…GEWI). Positions 464–489 (FQEEAEQNQRRQRKRPKTNQRFGNKR) are disordered. Positions 473-489 (RRQRKRPKTNQRFGNKR) are enriched in basic residues.

It belongs to the ThrE exporter (TC 2.A.79) family.

It localises to the cell membrane. It catalyses the reaction L-threonine(in) + H(+)(out) = L-threonine(out) + H(+)(in). With respect to regulation, transport is inhibited by the proton ionophore carbonyl cyanide m-chlorophenylhydrazone (CCCP). Functionally, catalyzes the export of L-threonine and L-serine from the cell to the extracellular environment. Export is dependent on the proton motive force. This is Threonine/serine exporter from Corynebacterium glutamicum (Brevibacterium saccharolyticum).